The following is a 200-amino-acid chain: Large ribosomal subunit protein uL4 (200 aa).

Residues 43–65 (RAQKTRSEVSGGGAKPWRQKGTG) are disordered.

It belongs to the universal ribosomal protein uL4 family. Part of the 50S ribosomal subunit.

Its function is as follows. One of the primary rRNA binding proteins, this protein initially binds near the 5'-end of the 23S rRNA. It is important during the early stages of 50S assembly. It makes multiple contacts with different domains of the 23S rRNA in the assembled 50S subunit and ribosome. Forms part of the polypeptide exit tunnel. This Aliivibrio salmonicida (strain LFI1238) (Vibrio salmonicida (strain LFI1238)) protein is Large ribosomal subunit protein uL4.